We begin with the raw amino-acid sequence, 327 residues long: Inactive peptidyl-prolyl cis-trans isomerase FKBP6 (327 aa).

The region spanning 54-143 is the PPIase FKBP-type domain; it reads DASVLVKYSG…LFEIELIDFL (90 aa). TPR repeat units follow at residues 171–204, 219–252, and 253–286; these read AATE…LHRR, LLVL…DKRN, and AKAL…QPCN.

The protein belongs to the FKBP6 family. In terms of assembly, interacts with HSP72/HSPA2 and CLTC. Interacts with GAPDH; leading to inhibit GAPDH catalytic activity. Interacts (via TPR repeats) with HSP90. In terms of tissue distribution, testis-specific.

The protein localises to the cytoplasm. Its subcellular location is the cytosol. It is found in the nucleus. It localises to the chromosome. In terms of biological role, co-chaperone required during spermatogenesis to repress transposable elements and prevent their mobilization, which is essential for the germline integrity. Acts via the piRNA metabolic process, which mediates the repression of transposable elements during meiosis by forming complexes composed of piRNAs and Piwi proteins and govern the methylation and subsequent repression of transposons. Acts as a co-chaperone via its interaction with HSP90 and is required for the piRNA amplification process, the secondary piRNA biogenesis. May be required together with HSP90 in removal of 16 nucleotide ping-pong by-products from Piwi complexes, possibly facilitating turnover of Piwi complexes. This is Inactive peptidyl-prolyl cis-trans isomerase FKBP6 (Fkbp6) from Mus musculus (Mouse).